Here is a 544-residue protein sequence, read N- to C-terminus: DNA mismatch repair protein MutL (544 aa).

It belongs to the DNA mismatch repair MutL/HexB family.

Its function is as follows. This protein is involved in the repair of mismatches in DNA. It is required for dam-dependent methyl-directed DNA mismatch repair. May act as a 'molecular matchmaker', a protein that promotes the formation of a stable complex between two or more DNA-binding proteins in an ATP-dependent manner without itself being part of a final effector complex. This Thermodesulfovibrio yellowstonii (strain ATCC 51303 / DSM 11347 / YP87) protein is DNA mismatch repair protein MutL.